The primary structure comprises 126 residues: Fatty acid-binding protein 2, liver (126 aa).

Cholate-binding positions include 54–56 (TPN), 99–101 (HIQ), and Arg-121.

This sequence belongs to the calycin superfamily. Fatty-acid binding protein (FABP) family.

The protein localises to the cytoplasm. Its function is as follows. Binds free fatty acids and their coenzyme A derivatives, bilirubin, and some other small molecules in the cytoplasm. May be involved in intracellular lipid transport. The specificity of axolotl L-FABP differs from that of LB-FABP. Binds 2 ligands per protein molecule. The polypeptide is Fatty acid-binding protein 2, liver (Ambystoma mexicanum (Axolotl)).